The chain runs to 200 residues: Cuticle protein 19.8 (200 aa).

A run of 3 repeats spans residues 20-23 (AAPA), 26-29 (AAPA), and 43-46 (AAPA). The 72-residue stretch at 56–127 (HPQYSYGYSV…EPGVHAPIAA (72 aa)) folds into the Chitin-binding type R&amp;R domain. Residues 70 to 89 (TGDSKSQQESRDGDVVQGSY) are disordered. 5 tandem repeats follow at residues 126–129 (AAPV), 144–147 (AAPA), 150–153 (AAPV), 159–162 (AAPA), and 177–180 (AAPA).

In terms of biological role, component of the cuticle of migratory locust which contains more than 100 different structural proteins. The chain is Cuticle protein 19.8 from Locusta migratoria (Migratory locust).